Here is a 150-residue protein sequence, read N- to C-terminus: Ribosome maturation factor RimP (150 aa).

It belongs to the RimP family.

It localises to the cytoplasm. Functionally, required for maturation of 30S ribosomal subunits. The sequence is that of Ribosome maturation factor RimP from Francisella tularensis subsp. holarctica (strain LVS).